We begin with the raw amino-acid sequence, 285 residues long: Neuralized-like protein 2 (285 aa).

The interval 1–20 (MAAASEPVDSGALWGLERPE) is disordered. Residues 23-244 (PTRFHRVHGA…STKSVRLVQL (222 aa)) form the NHR domain. Positions 250 to 285 (SLQTLCRLVIQRSMVHRLAIDGLHLPKELKDFCKYE) constitute an SOCS box domain.

Probable component the ECS(NEURL2) E3 ubiquitin-protein ligase complex consisting of ELOB/Elongin B, ELOC/Elongin C, CUL5, RBX1 and NEURL2. Interacts with CTNNB1. In terms of tissue distribution, expressed specifically in skeletal and cardiac muscles.

It is found in the cytoplasm. It functions in the pathway protein modification; protein ubiquitination. Plays an important role in the process of myofiber differentiation and maturation. Probable substrate-recognition component of a SCF-like ECS (Elongin BC-CUL2/5-SOCS-box protein) E3 ubiquitin-protein ligase complex, which mediates the ubiquitination of proteins. Probably contributes to catalysis through recognition and positioning of the substrate and the ubiquitin-conjugating enzyme. During myogenesis, controls the ubiquitination and degradation of the specific pool of CTNNB1/beta-catenin located at the sarcolemma. The chain is Neuralized-like protein 2 (NEURL2) from Homo sapiens (Human).